We begin with the raw amino-acid sequence, 153 residues long: Prophage Rz endopeptidase RzpD (153 aa).

Functionally, necessary for host cell lysis. It is believed to code for an endopeptidase that cleaves the amino-carboxyl cross-link between the diaminopimelic acid and D-alanine residues in the murein component of the bacterial cell wall. This is Prophage Rz endopeptidase RzpD (rzpD) from Escherichia coli (strain K12).